Consider the following 173-residue polypeptide: Ferritin-1 heavy chain (173 aa).

Positions 6 to 155 constitute a Ferritin-like diiron domain; it reads QNYHEECEAG…DYITNLIRVG (150 aa). Residues Glu23, Glu58, His61, Glu103, and Gln137 each coordinate Fe cation.

The protein belongs to the ferritin family. As to quaternary structure, oligomer of 24 subunits. The functional molecule forms a roughly spherical shell with a diameter of 12 nm and contains a central cavity into which the insoluble mineral iron core is deposited.

It carries out the reaction 4 Fe(2+) + O2 + 4 H(+) = 4 Fe(3+) + 2 H2O. Its function is as follows. Stores iron in a soluble, non-toxic, readily available form. Important for iron homeostasis. Has ferroxidase activity. Iron is taken up in the ferrous form and deposited as ferric hydroxides after oxidation. The polypeptide is Ferritin-1 heavy chain (SCM-1) (Schistosoma mansoni (Blood fluke)).